We begin with the raw amino-acid sequence, 814 residues long: Acyl-coenzyme A dehydrogenase (814 aa).

Glu497 (proton acceptor) is an active-site residue.

It belongs to the acyl-CoA dehydrogenase family. Requires FAD as cofactor.

It carries out the reaction a medium-chain 2,3-saturated fatty acyl-CoA + oxidized [electron-transfer flavoprotein] + H(+) = a medium-chain (2E)-enoyl-CoA + reduced [electron-transfer flavoprotein]. The enzyme catalyses a long-chain 2,3-saturated fatty acyl-CoA + oxidized [electron-transfer flavoprotein] + H(+) = a long-chain (2E)-enoyl-CoA + reduced [electron-transfer flavoprotein]. It functions in the pathway lipid metabolism; fatty acid beta-oxidation. In terms of biological role, catalyzes the dehydrogenation of acyl-coenzymes A (acyl-CoAs) to 2-enoyl-CoAs, the first step of the beta-oxidation cycle of fatty acid degradation. Is required for the utilization of medium- and long-chain fatty acids as sole carbon sources for growth. The polypeptide is Acyl-coenzyme A dehydrogenase (fadE) (Escherichia coli O157:H7).